A 116-amino-acid chain; its full sequence is Somatostatin (116 aa).

The first 24 residues, 1-24, serve as a signal peptide directing secretion; the sequence is MLSCRLQCALAALSIVLALGCVTG. Positions 25–88 are excised as a propeptide; it reads APSDPRLRQF…QDEMRLELQR (64 aa). Residue Ala43 is modified to Alanine amide. Residues 62–82 are disordered; sequence QTENDALEPEDLSQAAEQDEM. The cysteines at positions 105 and 116 are disulfide-linked.

This sequence belongs to the somatostatin family. In terms of processing, C-terminal amidation of the neuronostatin peptide is required for its biological activity, including for the regulation of mean arterial pressure.

It localises to the secreted. Inhibits the secretion of pituitary hormones, including that of growth hormone/somatotropin (GH1), PRL, ACTH, luteinizing hormone (LH) and TSH. Also impairs ghrelin- and GnRH-stimulated secretion of GH1 and LH; the inhibition of ghrelin-stimulated secretion of GH1 can be further increased by neuronostatin. Its function is as follows. May enhance low-glucose-induced glucagon release by pancreatic alpha cells. This effect may be mediated by binding to GPR107 and PKA activation. May regulate cardiac contractile function. May compromise cardiomyocyte viability. In the central nervous system, may impair memory retention and may affect hippocampal excitability. May also have anxiolytic and anorexigenic effects. May play a role in arterial pressure regulation. May inhibit basal, but not ghrelin- or GnRH-stimulated secretion of GH1 or LH, but does not affect the release of other pituitary hormones, including PRL, ACTH, FSH or TSH. Potentiates inhibitory action of somatostatin on ghrelin-stimulated secretion of GH1, but not that on GnRH-stimulated secretion of LH. This Homo sapiens (Human) protein is Somatostatin (SST).